The sequence spans 96 residues: MIALNTLAILSVASLAFAADGGAGDGLVLFGAAIGMAIAAAGCGIGQGMGLKAACEGTARNPEAGGKIMVTLILGLAFVESLAIYALVVNLMLLFR.

Helical transmembrane passes span 26–46 (GLVL…CGIG) and 68–88 (IMVT…YALV).

The protein belongs to the ATPase C chain family. As to quaternary structure, F-type ATPases have 2 components, F(1) - the catalytic core - and F(0) - the membrane proton channel. F(1) has five subunits: alpha(3), beta(3), gamma(1), delta(1), epsilon(1). F(0) has three main subunits: a(1), b(2) and c(10-14). The alpha and beta chains form an alternating ring which encloses part of the gamma chain. F(1) is attached to F(0) by a central stalk formed by the gamma and epsilon chains, while a peripheral stalk is formed by the delta and b chains.

The protein localises to the cell inner membrane. In terms of biological role, f(1)F(0) ATP synthase produces ATP from ADP in the presence of a proton or sodium gradient. F-type ATPases consist of two structural domains, F(1) containing the extramembraneous catalytic core and F(0) containing the membrane proton channel, linked together by a central stalk and a peripheral stalk. During catalysis, ATP synthesis in the catalytic domain of F(1) is coupled via a rotary mechanism of the central stalk subunits to proton translocation. Its function is as follows. Key component of the F(0) channel; it plays a direct role in translocation across the membrane. A homomeric c-ring of between 10-14 subunits forms the central stalk rotor element with the F(1) delta and epsilon subunits. The sequence is that of ATP synthase subunit c from Oleidesulfovibrio alaskensis (strain ATCC BAA-1058 / DSM 17464 / G20) (Desulfovibrio alaskensis).